The chain runs to 256 residues: Ubiquinone/menaquinone biosynthesis C-methyltransferase UbiE (256 aa).

Residues Thr-79, Asp-100, and 128–129 (DA) each bind S-adenosyl-L-methionine.

Belongs to the class I-like SAM-binding methyltransferase superfamily. MenG/UbiE family.

The catalysed reaction is a 2-demethylmenaquinol + S-adenosyl-L-methionine = a menaquinol + S-adenosyl-L-homocysteine + H(+). It carries out the reaction a 2-methoxy-6-(all-trans-polyprenyl)benzene-1,4-diol + S-adenosyl-L-methionine = a 5-methoxy-2-methyl-3-(all-trans-polyprenyl)benzene-1,4-diol + S-adenosyl-L-homocysteine + H(+). It functions in the pathway quinol/quinone metabolism; menaquinone biosynthesis; menaquinol from 1,4-dihydroxy-2-naphthoate: step 2/2. It participates in cofactor biosynthesis; ubiquinone biosynthesis. In terms of biological role, methyltransferase required for the conversion of demethylmenaquinol (DMKH2) to menaquinol (MKH2) and the conversion of 2-polyprenyl-6-methoxy-1,4-benzoquinol (DDMQH2) to 2-polyprenyl-3-methyl-6-methoxy-1,4-benzoquinol (DMQH2). The protein is Ubiquinone/menaquinone biosynthesis C-methyltransferase UbiE of Pseudomonas savastanoi pv. phaseolicola (strain 1448A / Race 6) (Pseudomonas syringae pv. phaseolicola (strain 1448A / Race 6)).